The sequence spans 208 residues: MARYRGPVEKLERRLGVSLALKGERRLAGKSALDKRPYAPGQHGQRKTKISEYGLQLREKQKAKFMYGVSEKQFRRLFSEAARREGNTGALLIGLLEQRLDNVVYRMGFATTRRFARQLVTHGHILVNGKKVDIPSYRVTAGEKIEVAEKSKTNPQIVRAIELTNQTGIVAWVDVEKDKKYGIFTRIPEREEVVIPVEERYIVELYSK.

The S4 RNA-binding domain occupies 98–161 (QRLDNVVYRM…KTNPQIVRAI (64 aa)).

The protein belongs to the universal ribosomal protein uS4 family. As to quaternary structure, part of the 30S ribosomal subunit. Contacts protein S5. The interaction surface between S4 and S5 is involved in control of translational fidelity.

Functionally, one of the primary rRNA binding proteins, it binds directly to 16S rRNA where it nucleates assembly of the body of the 30S subunit. With S5 and S12 plays an important role in translational accuracy. The protein is Small ribosomal subunit protein uS4 of Campylobacter fetus subsp. fetus (strain 82-40).